We begin with the raw amino-acid sequence, 215 residues long: Probable phosphoglycerate mutase GpmB (215 aa).

Residues 8–15 (RHGETQWN), 21–22 (QG), Arg-58, 82–85 (ELDM), 104–105 (RR), and 151–152 (GI) each bind substrate. Catalysis depends on His-9, which acts as the Tele-phosphohistidine intermediate. Glu-82 functions as the Proton donor/acceptor in the catalytic mechanism.

This sequence belongs to the phosphoglycerate mutase family. GpmB subfamily.

It carries out the reaction (2R)-2-phosphoglycerate = (2R)-3-phosphoglycerate. It functions in the pathway carbohydrate degradation; glycolysis; pyruvate from D-glyceraldehyde 3-phosphate: step 3/5. This chain is Probable phosphoglycerate mutase GpmB, found in Enterobacter sp. (strain 638).